The sequence spans 483 residues: MLTLDTLNVMLAVSEEGLIEEMIIALLASPQLAVFFEKFPRLKAAITDDVPRWREALRSRLKDARVPPELTEEVMCYQQSQLLSTPQFIVQLPQILDLLHRLNSPWAEQARQLVDANSTITSALHTLFLQRWRLSLIVQATTLNQQLLEEEREQLLSEVQERMTLSGQLEPILADNNTAAGRLWDMSAGQLKRGDYQLIVKYGEFLNEQPELKRLAEQLGRSREAKSIPRNDAQMETFRTMVREPATVPEQVDGLQQSDDILRLLPPELATLGITELEYEFYRRLVEKQLLTYRLHGESWREKVIERPVVHKDYDEQPRGPFIVCVDTSGSMGGFNEQCAKAFCLALMRIALAENRRCYIMLFSTEIVRYELSGPQGIEQAIRFLSQQFRGGTDLASCFRAIMERLQSREWFDADAVVISDFIAQRLPDDVTSKVKELQRVHQYRFHAVAMSAHGKPGIMRIFDHIWRFNTGMRSRLLRRWRR.

Belongs to the ViaA family. Homodimer. Interacts with RavA.

Its subcellular location is the cytoplasm. In terms of biological role, component of the RavA-ViaA chaperone complex, which may act on the membrane to optimize the function of some of the respiratory chains. ViaA stimulates the ATPase activity of RavA. The polypeptide is Regulatory protein ViaA (Escherichia coli O7:K1 (strain IAI39 / ExPEC)).